Consider the following 180-residue polypeptide: O-acetyl-ADP-ribose deacetylase (180 aa).

Positions 1–175 (MSGRINVVQG…LYQRLLGQYD (175 aa)) constitute a Macro domain. Substrate is bound by residues 11–12 (DI), N25, 33–35 (GVD), and 122–126 (STGIY). Residue D35 is the Proton acceptor of the active site.

Belongs to the MacroD-type family. YmdB subfamily. As to quaternary structure, homodimer. Interacts with RNase III.

The enzyme catalyses 3''-O-acetyl-ADP-D-ribose + H2O = ADP-D-ribose + acetate + H(+). It catalyses the reaction 2''-O-acetyl-ADP-D-ribose + H2O = ADP-D-ribose + acetate + H(+). Its function is as follows. Deacetylates O-acetyl-ADP ribose to yield ADP-ribose and free acetate. Down-regulates ribonuclease 3 (RNase III) activity. Acts by interacting directly with the region of the ribonuclease that is required for dimerization/activation. The chain is O-acetyl-ADP-ribose deacetylase from Cronobacter sakazakii (strain ATCC BAA-894) (Enterobacter sakazakii).